The following is a 304-amino-acid chain: Killer cell immunoglobulin-like receptor 2DS1 (304 aa).

The signal sequence occupies residues 1–21 (MSLTVVSMACVGFFLLQGAWP). The Extracellular segment spans residues 22–245 (HEGVHRKPSL…SETGNPRHLH (224 aa)). 2 Ig-like C2-type domains span residues 42–107 (EETV…VTHS) and 142–205 (GENV…FRDS). The cysteines at positions 49 and 100 are disulfide-linked. N-linked (GlcNAc...) asparagine glycosylation is found at N67, N84, N144, and N178. C149 and C198 are disulfide-bonded. The tract at residues 220-239 (VTGNPSNSWPSPTEPSSETG) is disordered. The span at 223–239 (NPSNSWPSPTEPSSETG) shows a compositional bias: low complexity. Residues 246-264 (VLIGTSVVKIPFTILLFFL) form a helical membrane-spanning segment. The Cytoplasmic segment spans residues 265–304 (LHRWCSDKKNAAVMDQEPAGNRTVNSEDSDEQDHQEVSYA). Positions 280–304 (QEPAGNRTVNSEDSDEQDHQEVSYA) are disordered.

Belongs to the immunoglobulin superfamily. As to quaternary structure, interacts with the adapter protein TYROBP/DAP12; the interaction enhances KIR2DS1 stability at the cell surface. As to expression, expressed by NK cells.

It localises to the cell membrane. Its function is as follows. Receptor on natural killer (NK) cells for some HLA-C alleles such as w6. Does not inhibit the activity of NK cells. This chain is Killer cell immunoglobulin-like receptor 2DS1, found in Homo sapiens (Human).